A 220-amino-acid polypeptide reads, in one-letter code: MEGVLNFLTNINVIFTLLGYLIGGIPFGYALMKIFYGMDITKIGSGGIGATNVLRALQSKGVSNAKQMALLVLILDLFKGMFAVFLSKLFGLDYSLQWMVAIASILGHCYSPFLNFNGGKGVSTIMGSVVLLIPIESLIGLTVWFFVGKVLKISSLASILGVGTATVLIFFVPYMHIPDSVNILKEVGTQTPMVLIFIFTLIKHAGNIFNLLTGKEKKVL.

6 helical membrane-spanning segments follow: residues 11-31 (INVI…GYAL), 70-90 (LLVL…SKLF), 96-116 (LQWM…FLNF), 127-147 (GSVV…WFFV), 153-173 (ISSL…FFVP), and 192-212 (PMVL…FNLL).

It belongs to the PlsY family. In terms of assembly, probably interacts with PlsX.

It localises to the cell inner membrane. It carries out the reaction an acyl phosphate + sn-glycerol 3-phosphate = a 1-acyl-sn-glycero-3-phosphate + phosphate. It functions in the pathway lipid metabolism; phospholipid metabolism. Functionally, catalyzes the transfer of an acyl group from acyl-phosphate (acyl-PO(4)) to glycerol-3-phosphate (G3P) to form lysophosphatidic acid (LPA). This enzyme utilizes acyl-phosphate as fatty acyl donor, but not acyl-CoA or acyl-ACP. In Helicobacter pylori (strain J99 / ATCC 700824) (Campylobacter pylori J99), this protein is Glycerol-3-phosphate acyltransferase.